We begin with the raw amino-acid sequence, 82 residues long: Putative membrane protein insertion efficiency factor (82 aa).

Belongs to the UPF0161 family.

The protein resides in the cell inner membrane. Could be involved in insertion of integral membrane proteins into the membrane. The polypeptide is Putative membrane protein insertion efficiency factor (Synechococcus elongatus (strain ATCC 33912 / PCC 7942 / FACHB-805) (Anacystis nidulans R2)).